Here is a 471-residue protein sequence, read N- to C-terminus: Lincomycin resistance protein LmrB (471 aa).

A run of 12 helical transmembrane segments spans residues 13–35 (PIPI…TALN), 55–77 (LTTG…LQWF), 84–106 (FTAV…FAML), 111–133 (VVQA…LIFP), 140–162 (AMGM…SGLI), 167–189 (TWNW…GMKF), 201–223 (IDIL…FSSA), 227–249 (GWGS…LFVW), 269–291 (FTLG…ILLP), 329–351 (AYGP…FFLT), 358–380 (SALT…MMPA), and 445–467 (GIQN…SLFI).

It belongs to the major facilitator superfamily. EmrB family.

It is found in the cell membrane. Its function is as follows. Proton-dependent transporter. May mediate the efflux of lincomycin. In Listeria monocytogenes serovar 1/2a (strain ATCC BAA-679 / EGD-e), this protein is Lincomycin resistance protein LmrB (lmrB).